We begin with the raw amino-acid sequence, 442 residues long: Zinc finger protein sfp1 (442 aa).

Residues 193–208 (AASSDMSSDEASSQAE) are compositionally biased toward low complexity. 2 disordered regions span residues 193 to 219 (AASSDMSSDEASSQAETTGTPKKMPES) and 304 to 333 (SPFVRKSSSDLEAKPSKKQRSTPAFSHDSP). 2 C2H2-type zinc fingers span residues 350–375 (YKCPVPNCDKAYKNQNGLKYHKLHGH) and 399–422 (YRCEVCSKRYKNLNGLKYHRTHSH).

Its subcellular location is the cytoplasm. The protein resides in the nucleus. The polypeptide is Zinc finger protein sfp1 (sfp1) (Schizosaccharomyces pombe (strain 972 / ATCC 24843) (Fission yeast)).